A 341-amino-acid polypeptide reads, in one-letter code: Very-long-chain 3-oxoacyl-CoA reductase (341 aa).

A helical transmembrane segment spans residues 15-35 (VVTAFSVIGIVFTILKFTSFA). Val-61, Asp-115, Asn-142, Lys-177, Tyr-216, Lys-220, Val-249, and Ser-251 together coordinate NADP(+). Tyr-216 (proton donor) is an active-site residue. Lys-220 serves as the catalytic Lowers pKa of active site Tyr.

Belongs to the short-chain dehydrogenases/reductases (SDR) family.

It is found in the endoplasmic reticulum membrane. It catalyses the reaction a very-long-chain (3R)-3-hydroxyacyl-CoA + NADP(+) = a very-long-chain 3-oxoacyl-CoA + NADPH + H(+). Its pathway is lipid metabolism; fatty acid biosynthesis. Its function is as follows. Component of the microsomal membrane bound fatty acid elongation system, which produces the 26-carbon very long-chain fatty acids (VLCFA) from palmitate. Catalyzes the reduction of the 3-ketoacyl-CoA intermediate that is formed in each cycle of fatty acid elongation. VLCFAs serve as precursors for ceramide and sphingolipids. The protein is Very-long-chain 3-oxoacyl-CoA reductase of Schizosaccharomyces pombe (strain 972 / ATCC 24843) (Fission yeast).